A 194-amino-acid chain; its full sequence is ATP-dependent Clp protease proteolytic subunit 3 (194 aa).

Ser96 serves as the catalytic Nucleophile. His121 is a catalytic residue.

Belongs to the peptidase S14 family. In terms of assembly, fourteen ClpP subunits assemble into 2 heptameric rings which stack back to back to give a disk-like structure with a central cavity, resembling the structure of eukaryotic proteasomes.

The protein localises to the cytoplasm. The catalysed reaction is Hydrolysis of proteins to small peptides in the presence of ATP and magnesium. alpha-casein is the usual test substrate. In the absence of ATP, only oligopeptides shorter than five residues are hydrolyzed (such as succinyl-Leu-Tyr-|-NHMec, and Leu-Tyr-Leu-|-Tyr-Trp, in which cleavage of the -Tyr-|-Leu- and -Tyr-|-Trp bonds also occurs).. Functionally, cleaves peptides in various proteins in a process that requires ATP hydrolysis. Has a chymotrypsin-like activity. Plays a major role in the degradation of misfolded proteins. This is ATP-dependent Clp protease proteolytic subunit 3 from Prochlorococcus marinus (strain NATL2A).